Reading from the N-terminus, the 442-residue chain is Ribosomal protein uS12 methylthiotransferase RimO (442 aa).

One can recognise an MTTase N-terminal domain in the interval 8-118 (PKVGFVSLGC…VLGHVHKYVA (111 aa)). The [4Fe-4S] cluster site is built by cysteine 17, cysteine 53, cysteine 82, cysteine 150, cysteine 154, and cysteine 157. Residues 136–373 (LTPRHYAYLK…MELQQQVSIR (238 aa)) form the Radical SAM core domain. The 67-residue stretch at 376-442 (ARKVGKEMTV…EYDLWASLIG (67 aa)) folds into the TRAM domain.

The protein belongs to the methylthiotransferase family. RimO subfamily. Requires [4Fe-4S] cluster as cofactor.

It localises to the cytoplasm. It carries out the reaction L-aspartate(89)-[ribosomal protein uS12]-hydrogen + (sulfur carrier)-SH + AH2 + 2 S-adenosyl-L-methionine = 3-methylsulfanyl-L-aspartate(89)-[ribosomal protein uS12]-hydrogen + (sulfur carrier)-H + 5'-deoxyadenosine + L-methionine + A + S-adenosyl-L-homocysteine + 2 H(+). Catalyzes the methylthiolation of an aspartic acid residue of ribosomal protein uS12. In Aeromonas salmonicida (strain A449), this protein is Ribosomal protein uS12 methylthiotransferase RimO.